Here is a 138-residue protein sequence, read N- to C-terminus: Ribosome-binding factor A (138 aa).

This sequence belongs to the RbfA family. As to quaternary structure, monomer. Binds 30S ribosomal subunits, but not 50S ribosomal subunits or 70S ribosomes.

The protein localises to the cytoplasm. Its function is as follows. One of several proteins that assist in the late maturation steps of the functional core of the 30S ribosomal subunit. Associates with free 30S ribosomal subunits (but not with 30S subunits that are part of 70S ribosomes or polysomes). Required for efficient processing of 16S rRNA. May interact with the 5'-terminal helix region of 16S rRNA. This chain is Ribosome-binding factor A, found in Sodalis glossinidius (strain morsitans).